The following is a 948-amino-acid chain: MAQQYQPGQRWISDSEAELGLGTILAQDGRLLTVLYPATGDTRQYSLRNAPLTRVRFSPGDQITHFEGWKLTVREVEDIDGLMVYHGLDGQNQPRTLPETQLSNFIQFRLASDRLFAGQIDPLSWFSLRYNTLQHTSKQMQSALWGLGGCRAQPIAHQLHIAREVADRSAPRVLLADEVGLGKTIEAGLVIHRQLLSGRANRVLILVPENLQHQWLVEMRRRFNLQVALFDAERFIESDASNPFEDAQLALVALEWLVDDEKAQDALFAAGWDLMVVDEAHHLVWHEDQASTEYSLVEQLAQVIPGVLLLTATPEQLGQDSHFARLRLLDPNRFHDLAAFRAESEHYRPVAEAVQELLDEGRLSPKAHATIQGFLGAEGEALLAAVNDGDTQASARLIRELLDRHGTGRVLFRNTRAAIQGFPERQLHPYPLATPEQYRDLPAGEHAELYPEVAFQAQGEAADDERWWRFDPRVDWLIDTLKMLKRTKVLVICAHAETAMDLEDALRVRSGIPASVFHEGMSILERDRAAAYFADEEFGAQVLICSEIGSEGRNFQFAHHLVMFDLPAHPDLLEQRIGRLDRIGQKHTIQLHIPYLQDSPQERLFQWYHEGLNAFLNTCPTGNALQHQFGPRLLPLLEGGESKAWDALVADARGERERLEAELHTGRDRLLELNSGGAGEGQALVEDILEQDDQFALPIYMETLFDAFGIDSEDHSENALILKPSEKMLDASFPLGDDEGVTITYDRAQALSREDMQFLTWEHPMVQGGMDLVLSGSMGNTAVALIKNKALKPGTVLLELLFVSEVVAPRSLQLGRYLPPAALRCLLDANGNDLASRVAFETLNDQLESVPRASANKFVQAQRDVLAKRISGGEEKILPIHVERVAEAQRRLAAEADEELARLVALQAVNPSVRDSEIDALRKQREDGLAMLEKAALRLEAIRVLVAG.

One can recognise a Helicase ATP-binding domain in the interval 164–332; the sequence is EVADRSAPRV…FARLRLLDPN (169 aa). Residue 177–184 participates in ATP binding; it reads DEVGLGKT. The short motif at 278–281 is the DEAH box element; it reads DEAH. One can recognise a Helicase C-terminal domain in the interval 473 to 627; sequence RVDWLIDTLK…TCPTGNALQH (155 aa).

This sequence belongs to the SNF2/RAD54 helicase family. RapA subfamily. As to quaternary structure, interacts with the RNAP. Has a higher affinity for the core RNAP than for the holoenzyme. Its ATPase activity is stimulated by binding to RNAP.

Transcription regulator that activates transcription by stimulating RNA polymerase (RNAP) recycling in case of stress conditions such as supercoiled DNA or high salt concentrations. Probably acts by releasing the RNAP, when it is trapped or immobilized on tightly supercoiled DNA. Does not activate transcription on linear DNA. Probably not involved in DNA repair. This chain is RNA polymerase-associated protein RapA, found in Pseudomonas putida (strain GB-1).